Here is a 141-residue protein sequence, read N- to C-terminus: Hemoglobin subunit alpha-D (141 aa).

The region spanning 1–141 (MLTADDKKIL…VAAVLAEKYR (141 aa)) is the Globin domain. Histidine 58 and histidine 87 together coordinate heme b.

The protein belongs to the globin family. Heterotetramer of two alpha-D chains and two beta chains. Red blood cells.

In terms of biological role, involved in oxygen transport from the lung to the various peripheral tissues. This Branta canadensis (Canada goose) protein is Hemoglobin subunit alpha-D (HBAD).